The chain runs to 110 residues: Suppressor of silencing 2b (110 aa).

The segment at 16 to 45 is disordered; the sequence is ARMVEAKKQRRRSHKQNRRERGHKSPSERA. The short motif at 22 to 27 is the Nuclear localization signal element; the sequence is KKQRRR. Basic residues predominate over residues 23–37; the sequence is KQRRRSHKQNRRERG.

The protein belongs to the cucumovirus/ilarvirus protein 2b family. In terms of assembly, homotetramer. Interacts with host AGO1; this interaction blocks AGO1 cleavage activity to attenuate RNA silencing and thus counter host defense. Interacts with host JAZ.

It localises to the host nucleus. Its function is as follows. Multifunctional protein that plays two independent roles: viral suppressor of host RNAi (VSR) and viral inducer of host attractiveness to insect vectors (VIA). Acts as a suppressor of RNA-mediated gene silencing, also known as post-transcriptional gene silencing (PTGS), a mechanism of plant viral defense that limits the accumulation of viral RNAs. May directly interfere with mobile silencing signaling. Also inhibits signal transduction by the phytohormone jasmonate, making the infected plant more attractive to aphids, which are the second host to play a role as a dissemination vector. Acts by binding to and inhibiting JAZ degradation in the host. The chain is Suppressor of silencing 2b from Cucurbita pepo (Vegetable marrow).